A 269-amino-acid polypeptide reads, in one-letter code: Tryptophan synthase alpha chain (269 aa).

Active-site proton acceptor residues include E56 and D67.

This sequence belongs to the TrpA family. Tetramer of two alpha and two beta chains.

It catalyses the reaction (1S,2R)-1-C-(indol-3-yl)glycerol 3-phosphate + L-serine = D-glyceraldehyde 3-phosphate + L-tryptophan + H2O. Its pathway is amino-acid biosynthesis; L-tryptophan biosynthesis; L-tryptophan from chorismate: step 5/5. Its function is as follows. The alpha subunit is responsible for the aldol cleavage of indoleglycerol phosphate to indole and glyceraldehyde 3-phosphate. In Mycobacterium ulcerans (strain Agy99), this protein is Tryptophan synthase alpha chain.